Consider the following 276-residue polypeptide: MEENSSKKKLSETMSIQDTVLKFFRVYIPNQTADDMNLPLVSDKISGKPLPRKVTVKSVSSGNIWRMEMKANGNTVFLRDGWKKIVKDENVTEPIFLEFEFDGYGVFHFCVYEYGSMCKRMRSPMEKEVIKVDSEEDVLVGNEESTKGLEESPRRGGTSRRRAKLKTKSHKIYEHLDNKLNPSFPVDMTQNRTRIPSLLIKDYNLTFPNMVIMRDKIGILKRRIVIWKNRSVYLNGIGSIIRRNHVKPGNEVVFELKMVNGYHGLVHEIKVHIIKA.

The TF-B3 DNA-binding region spans 11–115; it reads SETMSIQDTV…VFHFCVYEYG (105 aa). The tract at residues 141–164 is disordered; sequence GNEESTKGLEESPRRGGTSRRRAK. A compositionally biased stretch (basic and acidic residues) spans 144 to 154; sequence ESTKGLEESPR.

The protein localises to the nucleus. The protein is B3 domain-containing protein REM22 (REM22) of Arabidopsis thaliana (Mouse-ear cress).